We begin with the raw amino-acid sequence, 129 residues long: Snaclec coagulation factor IX-binding protein subunit A (129 aa).

Residues 1–129 (DCPSGWSSYE…GQQNPFVCEA (129 aa)) form the C-type lectin domain. 3 cysteine pairs are disulfide-bonded: C2–C13, C30–C127, and C102–C119. Residues S41, E43, and E47 each contribute to the Ca(2+) site. Position 128 (E128) interacts with Ca(2+).

This sequence belongs to the snaclec family. Heterodimer of subunits A and B; disulfide-linked. In terms of tissue distribution, expressed by the venom gland.

The protein localises to the secreted. Functionally, anticoagulant protein which binds to the gamma-carboxyglutamic acid-domain regions of factor IX (F9) (but not factor X) in the presence of calcium with a 1 to 1 stoichiometry. The polypeptide is Snaclec coagulation factor IX-binding protein subunit A (Protobothrops flavoviridis (Habu)).